A 398-amino-acid polypeptide reads, in one-letter code: Nicotinate phosphoribosyltransferase (398 aa).

At histidine 214 the chain carries Phosphohistidine; by autocatalysis.

The protein belongs to the NAPRTase family. Post-translationally, transiently phosphorylated on a His residue during the reaction cycle. Phosphorylation strongly increases the affinity for substrates and increases the rate of nicotinate D-ribonucleotide production. Dephosphorylation regenerates the low-affinity form of the enzyme, leading to product release.

It catalyses the reaction nicotinate + 5-phospho-alpha-D-ribose 1-diphosphate + ATP + H2O = nicotinate beta-D-ribonucleotide + ADP + phosphate + diphosphate. Its pathway is cofactor biosynthesis; NAD(+) biosynthesis; nicotinate D-ribonucleotide from nicotinate: step 1/1. Catalyzes the synthesis of beta-nicotinate D-ribonucleotide from nicotinate and 5-phospho-D-ribose 1-phosphate at the expense of ATP. In Xanthomonas campestris pv. campestris (strain B100), this protein is Nicotinate phosphoribosyltransferase.